The chain runs to 220 residues: Fructose-6-phosphate aldolase (220 aa).

The active-site Schiff-base intermediate with substrate is Lys-85.

This sequence belongs to the transaldolase family. Type 3A subfamily. In terms of assembly, homodecamer.

It is found in the cytoplasm. It catalyses the reaction beta-D-fructose 6-phosphate = dihydroxyacetone + D-glyceraldehyde 3-phosphate. In terms of biological role, catalyzes the reversible formation of fructose 6-phosphate from dihydroxyacetone and D-glyceraldehyde 3-phosphate via an aldolization reaction. This is Fructose-6-phosphate aldolase from Salmonella choleraesuis (strain SC-B67).